The sequence spans 876 residues: Leucine--tRNA ligase (876 aa).

The 'HIGH' region signature appears at 43–53 (PYPSGRIHMGH). Positions 632–636 (KMSKS) match the 'KMSKS' region motif. Lys635 serves as a coordination point for ATP.

This sequence belongs to the class-I aminoacyl-tRNA synthetase family.

The protein resides in the cytoplasm. The catalysed reaction is tRNA(Leu) + L-leucine + ATP = L-leucyl-tRNA(Leu) + AMP + diphosphate. This chain is Leucine--tRNA ligase, found in Rhodopseudomonas palustris (strain TIE-1).